The primary structure comprises 112 residues: MEKVLALLLVTLTVAYAVPDPRGIIINLDEGELCLNSAQCKSNCCQHDTILSLSRCALKARENSECSAFTLYGVYYKCPCERGLTCEGDKSLVGSITNTNFGICHDVGRSSD.

An N-terminal signal peptide occupies residues 1 to 17 (MEKVLALLLVTLTVAYA). Residues 18–22 (VPDPR) constitute a propeptide, enterostatin, activation peptide. 5 disulfide bridges follow: cysteine 34/cysteine 45, cysteine 40/cysteine 56, cysteine 44/cysteine 78, cysteine 66/cysteine 86, and cysteine 80/cysteine 104.

It belongs to the colipase family. As to quaternary structure, forms a 1:1 stoichiometric complex with pancreatic lipase. As to expression, expressed by the pancreas.

Its subcellular location is the secreted. Colipase is a cofactor of pancreatic lipase. It allows the lipase to anchor itself to the lipid-water interface. Without colipase the enzyme is washed off by bile salts, which have an inhibitory effect on the lipase. Its function is as follows. Enterostatin has a biological activity as a satiety signal. This chain is Colipase (CLPS), found in Sus scrofa (Pig).